A 169-amino-acid chain; its full sequence is Putative phosphoesterase SH1944 (169 aa).

H34 serves as the catalytic Proton donor. 2 short sequence motifs (HXTX) span residues 34–37 and 115–118; these read HITI and HFTI. Catalysis depends on H115, which acts as the Proton acceptor.

The protein belongs to the 2H phosphoesterase superfamily. YjcG family.

This is Putative phosphoesterase SH1944 from Staphylococcus haemolyticus (strain JCSC1435).